Consider the following 81-residue polypeptide: Cytotoxin 3a (81 aa).

A signal peptide spans 1-21; the sequence is MKTLLLTLVVVTIVCLDLGYT. 4 disulfides stabilise this stretch: Cys24–Cys42, Cys35–Cys59, Cys63–Cys74, and Cys75–Cys80.

It belongs to the three-finger toxin family. Short-chain subfamily. Type IA cytotoxin sub-subfamily. In terms of assembly, monomer in solution; Homodimer and oligomer in the presence of negatively charged lipids forming a pore with a size ranging between 20 and 30 Angstroms. As to expression, expressed by the venom gland.

It localises to the secreted. It is found in the target cell membrane. In terms of biological role, shows cytolytic activity on many different cells by forming pore in lipid membranes. In vivo, increases heart rate or kills the animal by cardiac arrest. In addition, it binds to heparin with high affinity, interacts with Kv channel-interacting protein 1 (KCNIP1) in a calcium-independent manner, and binds to integrin alpha-V/beta-3 (ITGAV/ITGB3) with moderate affinity. The protein is Cytotoxin 3a of Naja atra (Chinese cobra).